The primary structure comprises 285 residues: Pantothenate synthetase (285 aa).

30–37 (MGNLHDGH) lines the ATP pocket. The active-site Proton donor is the His-37. (R)-pantoate is bound at residue Gln-61. A beta-alanine-binding site is contributed by Gln-61. 149 to 152 (GEKD) is an ATP binding site. (R)-pantoate is bound at residue Gln-155. ATP is bound by residues Ile-178 and 186–189 (LSSR).

This sequence belongs to the pantothenate synthetase family. As to quaternary structure, homodimer.

It localises to the cytoplasm. The catalysed reaction is (R)-pantoate + beta-alanine + ATP = (R)-pantothenate + AMP + diphosphate + H(+). It participates in cofactor biosynthesis; (R)-pantothenate biosynthesis; (R)-pantothenate from (R)-pantoate and beta-alanine: step 1/1. Functionally, catalyzes the condensation of pantoate with beta-alanine in an ATP-dependent reaction via a pantoyl-adenylate intermediate. The sequence is that of Pantothenate synthetase from Buchnera aphidicola subsp. Acyrthosiphon pisum (strain 5A).